Consider the following 856-residue polypeptide: DNA mismatch repair protein MutS (856 aa).

Residue 623–630 (GPNMSGKS) coordinates ATP.

The protein belongs to the DNA mismatch repair MutS family.

Its function is as follows. This protein is involved in the repair of mismatches in DNA. It is possible that it carries out the mismatch recognition step. This protein has a weak ATPase activity. This Natronomonas pharaonis (strain ATCC 35678 / DSM 2160 / CIP 103997 / JCM 8858 / NBRC 14720 / NCIMB 2260 / Gabara) (Halobacterium pharaonis) protein is DNA mismatch repair protein MutS.